Reading from the N-terminus, the 536-residue chain is Putative UDP-glucuronosyltransferase ugt-47 (536 aa).

Residues 1 to 21 (MMLQTSTILQLLLFLVGSVSA) form the signal peptide. Residues asparagine 52 and asparagine 308 are each glycosylated (N-linked (GlcNAc...) asparagine). The chain crosses the membrane as a helical span at residues 497 to 517 (IIVPVLFVLLYCLIIPFFKLI).

This sequence belongs to the UDP-glycosyltransferase family.

The protein localises to the membrane. It carries out the reaction glucuronate acceptor + UDP-alpha-D-glucuronate = acceptor beta-D-glucuronoside + UDP + H(+). This chain is Putative UDP-glucuronosyltransferase ugt-47 (ugt-47), found in Caenorhabditis briggsae.